We begin with the raw amino-acid sequence, 552 residues long: Hydroxylamine reductase (552 aa).

C3, C6, C15, and C21 together coordinate [4Fe-4S] cluster. Hybrid [4Fe-2O-2S] cluster is bound by residues H247, E271, C315, C407, C435, C460, E495, and K497. C407 carries the post-translational modification Cysteine persulfide.

It belongs to the HCP family. [4Fe-4S] cluster serves as cofactor. Hybrid [4Fe-2O-2S] cluster is required as a cofactor.

The protein resides in the cytoplasm. It catalyses the reaction A + NH4(+) + H2O = hydroxylamine + AH2 + H(+). In terms of biological role, catalyzes the reduction of hydroxylamine to form NH(3) and H(2)O. The polypeptide is Hydroxylamine reductase (Thermosipho melanesiensis (strain DSM 12029 / CIP 104789 / BI429)).